The chain runs to 164 residues: MARPQQRYRGFRQRHWGSWVSEIRHSILKTRIWQGTFESAEDAARAYDEAARLMCGTRARTNFPYNPNASQSSSSKLLSATLIAKLHRCYMASLQMTRPSSLPEAPRIIASPNNAVKGIGADAMLLPKKREQEEQETGGNLDFKKVKVECSQQFKPLEEDHIAQ.

The AP2/ERF DNA-binding region spans 7 to 64 (RYRGFRQRHWGSWVSEIRHSILKTRIWQGTFESAEDAARAYDEAARLMCGTRARTNFP).

The protein localises to the nucleus. In terms of biological role, essential for all lupin cells independent of the respective tissue. This chain is Protein PPLZ02 (PPLZ02), found in Lupinus polyphyllus (Large-leaved lupine).